The chain runs to 185 residues: Large ribosomal subunit protein bL25 (185 aa).

It belongs to the bacterial ribosomal protein bL25 family. CTC subfamily. As to quaternary structure, part of the 50S ribosomal subunit; part of the 5S rRNA/L5/L18/L25 subcomplex. Contacts the 5S rRNA. Binds to the 5S rRNA independently of L5 and L18.

Functionally, this is one of the proteins that binds to the 5S RNA in the ribosome where it forms part of the central protuberance. In Microcystis aeruginosa (strain NIES-843 / IAM M-2473), this protein is Large ribosomal subunit protein bL25.